We begin with the raw amino-acid sequence, 238 residues long: MAQEMTGNENIGKEELARRPIRSFVLRQGRLTHAQQRALDELMPVFGVPYAPVILDLDSLFGREGSPKVLEIGFGMGDSTAKIAQSQPECDFIGVEVHTPGVGSLLKQIGELQLNNLRIIQHDAVEVLQHMIADASLDGVHIFFPDPWHKKRHHKRRLIQAAFVKLLCSKMKAGAYLHVATDWQEYAEWVLDILQQEPLLENTAQSYAPKPDYRPLTKFENRGIKLGHGVWDIIFRRK.

The S-adenosyl-L-methionine site is built by glutamate 71, glutamate 96, aspartate 123, and aspartate 146. Residue aspartate 146 is part of the active site. Residues lysine 150, aspartate 182, and 217–220 (TKFE) each bind substrate.

The protein belongs to the class I-like SAM-binding methyltransferase superfamily. TrmB family.

The enzyme catalyses guanosine(46) in tRNA + S-adenosyl-L-methionine = N(7)-methylguanosine(46) in tRNA + S-adenosyl-L-homocysteine. It participates in tRNA modification; N(7)-methylguanine-tRNA biosynthesis. In terms of biological role, catalyzes the formation of N(7)-methylguanine at position 46 (m7G46) in tRNA. The protein is tRNA (guanine-N(7)-)-methyltransferase of Methylobacillus flagellatus (strain ATCC 51484 / DSM 6875 / VKM B-1610 / KT).